A 1438-amino-acid polypeptide reads, in one-letter code: DNA polymerase III PolC-type (1438 aa).

One can recognise an Exonuclease domain in the interval 422 to 578 (YVVFDVETTG…YDTEATAYIF (157 aa)).

Belongs to the DNA polymerase type-C family. PolC subfamily.

It localises to the cytoplasm. The enzyme catalyses DNA(n) + a 2'-deoxyribonucleoside 5'-triphosphate = DNA(n+1) + diphosphate. Its function is as follows. Required for replicative DNA synthesis. This DNA polymerase also exhibits 3' to 5' exonuclease activity. The polypeptide is DNA polymerase III PolC-type (Staphylococcus aureus (strain MRSA252)).